Reading from the N-terminus, the 274-residue chain is NADPH-dependent 7-cyano-7-deazaguanine reductase (274 aa).

80-82 is a binding site for substrate; it reads VES. 82-83 contacts NADPH; it reads SK. Cys181 serves as the catalytic Thioimide intermediate. Asp188 serves as the catalytic Proton donor. 220–221 is a substrate binding site; that stretch reads HE. 249–250 provides a ligand contact to NADPH; it reads RG.

It belongs to the GTP cyclohydrolase I family. QueF type 2 subfamily. In terms of assembly, homodimer.

It is found in the cytoplasm. The catalysed reaction is 7-aminomethyl-7-carbaguanine + 2 NADP(+) = 7-cyano-7-deazaguanine + 2 NADPH + 3 H(+). It functions in the pathway tRNA modification; tRNA-queuosine biosynthesis. Functionally, catalyzes the NADPH-dependent reduction of 7-cyano-7-deazaguanine (preQ0) to 7-aminomethyl-7-deazaguanine (preQ1). The sequence is that of NADPH-dependent 7-cyano-7-deazaguanine reductase from Burkholderia ambifaria (strain MC40-6).